The primary structure comprises 66 residues: DNA-directed RNA polymerase subunit Rpo10 (66 aa).

Residues C7, C10, C44, and C45 each contribute to the Zn(2+) site.

The protein belongs to the archaeal Rpo10/eukaryotic RPB10 RNA polymerase subunit family. As to quaternary structure, part of the RNA polymerase complex. It depends on Zn(2+) as a cofactor.

It is found in the cytoplasm. It catalyses the reaction RNA(n) + a ribonucleoside 5'-triphosphate = RNA(n+1) + diphosphate. Functionally, DNA-dependent RNA polymerase (RNAP) catalyzes the transcription of DNA into RNA using the four ribonucleoside triphosphates as substrates. The protein is DNA-directed RNA polymerase subunit Rpo10 of Pyrobaculum islandicum (strain DSM 4184 / JCM 9189 / GEO3).